We begin with the raw amino-acid sequence, 212 residues long: Peptide methionine sulfoxide reductase MsrA (212 aa).

Residue cysteine 52 is part of the active site.

The protein belongs to the MsrA Met sulfoxide reductase family.

The catalysed reaction is L-methionyl-[protein] + [thioredoxin]-disulfide + H2O = L-methionyl-(S)-S-oxide-[protein] + [thioredoxin]-dithiol. It catalyses the reaction [thioredoxin]-disulfide + L-methionine + H2O = L-methionine (S)-S-oxide + [thioredoxin]-dithiol. In terms of biological role, has an important function as a repair enzyme for proteins that have been inactivated by oxidation. Catalyzes the reversible oxidation-reduction of methionine sulfoxide in proteins to methionine. The polypeptide is Peptide methionine sulfoxide reductase MsrA (Salmonella paratyphi A (strain AKU_12601)).